The following is a 283-amino-acid chain: Protein ATAF2 (283 aa).

Positions 7–159 (LPAGFRFHPT…DWVLCRIYNK (153 aa)) constitute an NAC domain. A DNA-binding region spans residues 103–165 (LGIKKALVFY…IYNKKGTMEK (63 aa)). Residues 171–211 (EKPRTTTMAEQSSSPFDTSDSTYPTLQEDDSSSSGGHGHVV) form a disordered region. Positions 175-195 (TTTMAEQSSSPFDTSDSTYPT) are enriched in polar residues.

Homodimer. Interacts with AHK2. Interacts with AHL12 and AHL27. Interacts with the helicase domain of the tobamovirus (TMV) replicase. In terms of tissue distribution, expressed in roots, cotyledons, rosette leaves, cauline leaves and mature flowers. Expressed at low levels in stems and flower buds.

It is found in the nucleus. In terms of biological role, involved in disease resistance response. May function as repressor of pathogenesis-related proteins. May function in the regulation of host basal defense responses against viral infection. Transcriptional activator involved in responses to wounding and infection with tobamovirus (TMV). Binds to the DNA sequences 5'-AAAATATCT-3' and 5'AGATTTTT-3' of CYP734A1/BAS1 and CYP72C1/SOB7 promoters, respectively. Acts as a suppressor of the brassinosteroid (BR)-inactivating enzymes CYP734A1/BAS1 and CYP72C1/SOB7, and prevents their expression in almost all tissues. Plays a central role in integrating BR homeostasis and seedling development. Regulates the spatial regulation of BR homeostasis and participates in the regulation of hypocotyl elongation and root growth by suppressing BR catabolism. Mediates connection between BR catabolism and photomorphogenesis. Binds to, and transactivates the promoter of the auxin biosynthetic gene NIT2. Stress-responsive NAC transcription factor involved in ABA-inducible leaf senescence signaling. Required for normal seed development and morphology. The chain is Protein ATAF2 (NAC081) from Arabidopsis thaliana (Mouse-ear cress).